The chain runs to 2904 residues: Highly reducing polyketide synthase bet1 (2904 aa).

One can recognise a Ketosynthase family 3 (KS3) domain in the interval 8-441; that stretch reads NEPIAIVGSG…GTNAHAIVES (434 aa). Residues cysteine 181, histidine 320, and histidine 361 each act as for beta-ketoacyl synthase activity in the active site. The tract at residues 553–875 is acyl transferase (AT) domain; that stretch reads VFTGQGAQYA…PYHGTLLRGG (323 aa). The tract at residues 948 to 1081 is N-terminal hotdog fold; the sequence is HQLLGDVSPD…GELKVVLVDE (134 aa). One can recognise a PKS/mFAS DH domain in the interval 948-1257; the sequence is HQLLGDVSPD…FKPVGSDASN (310 aa). The interval 971–1255 is dehydratase (DH) domain; sequence PREMTWLEGH…VKFKPVGSDA (285 aa). Histidine 980 serves as the catalytic Proton acceptor; for dehydratase activity. Residues 1098–1257 are C-terminal hotdog fold; sequence MIPVQPSRLY…FKPVGSDASN (160 aa). Aspartate 1159 (proton donor; for dehydratase activity) is an active-site residue. The tract at residues 1411-1596 is methyltransferase (cMeT) domain; sequence KQSTLWVASI…GFSGIDTMSP (186 aa). The interval 2125–2298 is ketoreductase (KR)domain; the sequence is TYWLVGLSGA…RSSVVNVGAI (174 aa). Positions 2407 to 2486 constitute a Carrier domain; it reads EVANVIKQAY…SLVELAAESI (80 aa). Serine 2445 carries the O-(pantetheine 4'-phosphoryl)serine modification. Positions 2492–2543 are disordered; the sequence is PGVPQANANPNGPSSPDSDATESSNQNSDVDVTSTRATSPSTPAATSPDSNV. Over residues 2497 to 2523 the composition is skewed to polar residues; sequence ANANPNGPSSPDSDATESSNQNSDVDV. The segment covering 2524 to 2541 has biased composition (low complexity); sequence TSTRATSPSTPAATSPDS. The interval 2585–2817 is reductase (R) domain; sequence LTGCSGLLGH…DLVSVETCCE (233 aa).

Requires pantetheine 4'-phosphate as cofactor.

It carries out the reaction 7 malonyl-CoA + acetyl-CoA + 10 AH2 + 5 S-adenosyl-L-methionine + 2 H(+) = dehydroprobetaenone I + 10 A + 5 S-adenosyl-L-homocysteine + 7 CO2 + 8 CoA + 6 H2O. Its pathway is mycotoxin biosynthesis. In terms of biological role, highly reducing polyketide synthase; part of the gene cluster that mediates the biosynthesis of betaenones, phytotoxic polyketides involved in leaf spot disease in sugar beets. The first step of the pathway is the synthesis of dehydroprobetaenone I by the polyketide synthase bet1 and the enoyl reductase bet3 via condensation of one acetyl-CoA starter unit with 7 malonyl-CoA units and 5 methylations. The C-terminal reductase (R) domain of bet1 catalyzes the reductive release of the polyketide chain. Because bet1 lacks a designated enoylreductase (ER) domain, the required activity is provided the enoyl reductase bet3. The short-chain dehydrogenase/reductase bet4 then catalyzes reduction of dehydroprobetaenone I to probetaenone I. The cytochrome P450 monooxygenase bet2 catalyzes successive epoxidation, oxidation (resulting from epoxide opening) and hydroxylation to install a tertiary alcohol in the decaline ring to yield betaenone C from dehydroprobetaenone I and betaenone B from probetaenone I. The FAD-linked oxidoreductase (orf1) is probably responsible for the conversion of betaenone C to betaenone A via an intramolecular aldol reaction between C-1 and C-17 to form the bridged tricyclic system in betaenone A. This Neocamarosporium betae (Beet black rot fungus) protein is Highly reducing polyketide synthase bet1.